The primary structure comprises 91 residues: Small ribosomal subunit protein uS15c (91 aa).

This sequence belongs to the universal ribosomal protein uS15 family. In terms of assembly, part of the 30S ribosomal subunit.

The protein resides in the plastid. It is found in the chloroplast. The protein is Small ribosomal subunit protein uS15c (rps15) of Eucalyptus globulus subsp. globulus (Tasmanian blue gum).